We begin with the raw amino-acid sequence, 211 residues long: ATP-dependent Clp protease proteolytic subunit 1 (211 aa).

S107 serves as the catalytic Nucleophile. H132 is an active-site residue.

It belongs to the peptidase S14 family. As to quaternary structure, fourteen ClpP subunits assemble into 2 heptameric rings which stack back to back to give a disk-like structure with a central cavity, resembling the structure of eukaryotic proteasomes.

The protein localises to the cytoplasm. It catalyses the reaction Hydrolysis of proteins to small peptides in the presence of ATP and magnesium. alpha-casein is the usual test substrate. In the absence of ATP, only oligopeptides shorter than five residues are hydrolyzed (such as succinyl-Leu-Tyr-|-NHMec, and Leu-Tyr-Leu-|-Tyr-Trp, in which cleavage of the -Tyr-|-Leu- and -Tyr-|-Trp bonds also occurs).. Its function is as follows. Cleaves peptides in various proteins in a process that requires ATP hydrolysis. Has a chymotrypsin-like activity. Plays a major role in the degradation of misfolded proteins. The sequence is that of ATP-dependent Clp protease proteolytic subunit 1 from Mycolicibacterium paratuberculosis (strain ATCC BAA-968 / K-10) (Mycobacterium paratuberculosis).